Here is a 278-residue protein sequence, read N- to C-terminus: Small ribosomal subunit protein uS2 (278 aa).

The disordered stretch occupies residues 235-278 (QRRKDHGEGGQQAAGGGRGQRDEINVYQGGRGGRGGGPRQQQAS). Composition is skewed to gly residues over residues 243–252 (GGQQAAGGGR) and 263–272 (GGRGGRGGGP).

The protein belongs to the universal ribosomal protein uS2 family.

The sequence is that of Small ribosomal subunit protein uS2 from Sorangium cellulosum (strain So ce56) (Polyangium cellulosum (strain So ce56)).